The following is a 514-amino-acid chain: Nitric oxide reductase transcription regulator NorR1 (514 aa).

Position 54 is a 4-aspartylphosphate (Asp-54). One can recognise a Sigma-54 factor interaction domain in the interval Ile-187–Leu-416. ATP is bound by residues Gly-215–Glu-222 and Glu-287–Gln-296. The segment at residues Trp-490–Lys-509 is a DNA-binding region (H-T-H motif).

It participates in nitrogen metabolism; nitrate reduction (denitrification) [regulation]. In terms of biological role, required for the nitric oxide (NO) induced expression of NO reductase. Not required for expression of 2 other pathway members, nitrate reductase (nirS) and nitrous oxide reductase (nosZ). The protein is Nitric oxide reductase transcription regulator NorR1 (norR1) of Cupriavidus necator (strain ATCC 17699 / DSM 428 / KCTC 22496 / NCIMB 10442 / H16 / Stanier 337) (Ralstonia eutropha).